We begin with the raw amino-acid sequence, 572 residues long: Hemagglutinin-neuraminidase (572 aa).

The Intravirion segment spans residues 1-31; sequence MEYWKHTNHGKDAGNELETSMATHGNKLTNK. Residues 32–52 form a helical membrane-spanning segment; sequence IIYILWTIILVLLSIVFIIVL. Over 53 to 572 the chain is Virion surface; that stretch reads INSIKSEKAH…FKTEIPKSCS (520 aa). Disulfide bonds link C190–C214 and C256–C269. An involved in neuraminidase activity region spans residues 252 to 257; sequence NRKSCS. N-linked (GlcNAc...) asparagine; by host glycosylation is found at N308 and N351. 2 disulfides stabilise this stretch: C355–C469 and C463–C473. N-linked (GlcNAc...) asparagine; by host glycosylation is present at N523. C535 and C544 are joined by a disulfide.

It belongs to the paramyxoviruses hemagglutinin-neuraminidase family. Homotetramer; composed of disulfide-linked homodimers. Interacts with F protein trimer.

The protein localises to the virion membrane. It is found in the host cell membrane. It carries out the reaction Hydrolysis of alpha-(2-&gt;3)-, alpha-(2-&gt;6)-, alpha-(2-&gt;8)- glycosidic linkages of terminal sialic acid residues in oligosaccharides, glycoproteins, glycolipids, colominic acid and synthetic substrates.. In terms of biological role, attaches the virus to sialic acid-containing cell receptors and thereby initiating infection. Binding of HN protein to the receptor induces a conformational change that allows the F protein to trigger virion/cell membranes fusion. Neuraminidase activity ensures the efficient spread of the virus by dissociating the mature virions from the neuraminic acid containing glycoproteins. The polypeptide is Hemagglutinin-neuraminidase (HN) (Homo sapiens (Human)).